A 181-amino-acid chain; its full sequence is 3-isopropylmalate dehydratase small subunit (181 aa).

Belongs to the LeuD family. LeuD type 2 subfamily. As to quaternary structure, heterodimer of LeuC and LeuD.

It catalyses the reaction (2R,3S)-3-isopropylmalate = (2S)-2-isopropylmalate. The protein operates within amino-acid biosynthesis; L-leucine biosynthesis; L-leucine from 3-methyl-2-oxobutanoate: step 2/4. Functionally, catalyzes the isomerization between 2-isopropylmalate and 3-isopropylmalate, via the formation of 2-isopropylmaleate. The protein is 3-isopropylmalate dehydratase small subunit of Deinococcus deserti (strain DSM 17065 / CIP 109153 / LMG 22923 / VCD115).